The sequence spans 437 residues: Adenylosuccinate synthetase (437 aa).

GTP contacts are provided by residues 12 to 18 (GDEGKGK) and 40 to 42 (GHT). The active-site Proton acceptor is D13. D13 and G40 together coordinate Mg(2+). IMP-binding positions include 13–16 (DEGK), 38–41 (NAGH), T128, R142, Q223, T238, and R302. The active-site Proton donor is H41. 298–304 (TTTGRRR) is a binding site for substrate. GTP contacts are provided by residues R304, 330-332 (KLD), and 412-414 (SLG).

This sequence belongs to the adenylosuccinate synthetase family. As to quaternary structure, homodimer. Requires Mg(2+) as cofactor.

It is found in the cytoplasm. The catalysed reaction is IMP + L-aspartate + GTP = N(6)-(1,2-dicarboxyethyl)-AMP + GDP + phosphate + 2 H(+). It participates in purine metabolism; AMP biosynthesis via de novo pathway; AMP from IMP: step 1/2. In terms of biological role, plays an important role in the de novo pathway of purine nucleotide biosynthesis. Catalyzes the first committed step in the biosynthesis of AMP from IMP. In Synechococcus sp. (strain RCC307), this protein is Adenylosuccinate synthetase.